A 288-amino-acid polypeptide reads, in one-letter code: Thymidylate synthase (288 aa).

Arg-21 is a binding site for dUMP. His-51 serves as a coordination point for (6R)-5,10-methylene-5,6,7,8-tetrahydrofolate. Arg-150–Arg-151 is a dUMP binding site. The active-site Nucleophile is Cys-170. Residues Arg-190–Asp-193, Asn-201, and His-231–Tyr-233 each bind dUMP. Asp-193 contributes to the (6R)-5,10-methylene-5,6,7,8-tetrahydrofolate binding site. Residue Ala-287 participates in (6R)-5,10-methylene-5,6,7,8-tetrahydrofolate binding.

The protein belongs to the thymidylate synthase family. Bacterial-type ThyA subfamily. As to quaternary structure, homodimer.

It is found in the cytoplasm. The catalysed reaction is dUMP + (6R)-5,10-methylene-5,6,7,8-tetrahydrofolate = 7,8-dihydrofolate + dTMP. Its pathway is pyrimidine metabolism; dTTP biosynthesis. Its function is as follows. Catalyzes the reductive methylation of 2'-deoxyuridine-5'-monophosphate (dUMP) to 2'-deoxythymidine-5'-monophosphate (dTMP) while utilizing 5,10-methylenetetrahydrofolate (mTHF) as the methyl donor and reductant in the reaction, yielding dihydrofolate (DHF) as a by-product. This enzymatic reaction provides an intracellular de novo source of dTMP, an essential precursor for DNA biosynthesis. In Mycoplasma mobile (strain ATCC 43663 / 163K / NCTC 11711) (Mesomycoplasma mobile), this protein is Thymidylate synthase.